The primary structure comprises 586 residues: ATP-dependent lipid A-core flippase (586 aa).

The next 4 helical transmembrane spans lie at 25–45 (AYFI…AQLI), 74–94 (LWFV…GAYF), 163–183 (VAWF…AFIC), and 264–284 (VLHI…MILW). In terms of domain architecture, ABC transmembrane type-1 spans 28–317 (IISFIGFGVF…LTKINSIIQK (290 aa)). Residues 349–583 (VELKDVHFGY…SGVYANLYHS (235 aa)) enclose the ABC transporter domain. Position 382–389 (382–389 (GSSGSGKS)) interacts with ATP.

This sequence belongs to the ABC transporter superfamily. Lipid exporter (TC 3.A.1.106) family. As to quaternary structure, homodimer.

It localises to the cell inner membrane. The catalysed reaction is ATP + H2O + lipid A-core oligosaccharideSide 1 = ADP + phosphate + lipid A-core oligosaccharideSide 2.. In terms of biological role, involved in lipopolysaccharide (LPS) biosynthesis. Translocates lipid A-core from the inner to the outer leaflet of the inner membrane. Transmembrane domains (TMD) form a pore in the inner membrane and the ATP-binding domain (NBD) is responsible for energy generation. The chain is ATP-dependent lipid A-core flippase from Saccharophagus degradans (strain 2-40 / ATCC 43961 / DSM 17024).